The chain runs to 126 residues: Large ribosomal subunit protein bL17 (126 aa).

This sequence belongs to the bacterial ribosomal protein bL17 family. Part of the 50S ribosomal subunit. Contacts protein L32.

The protein is Large ribosomal subunit protein bL17 of Coxiella burnetii (strain CbuG_Q212) (Coxiella burnetii (strain Q212)).